A 210-amino-acid chain; its full sequence is Probable membrane protein MT1774 (210 aa).

The next 2 helical transmembrane spans lie at 43 to 63 (AVVM…AAAA) and 165 to 185 (ALAA…LLAL).

The protein resides in the cell membrane. This chain is Probable membrane protein MT1774, found in Mycobacterium tuberculosis (strain CDC 1551 / Oshkosh).